The following is a 78-amino-acid chain: Omega-conotoxin-like 12 (78 aa).

Positions 1 to 22 (MKLTCVVIVAVLLLTACQLITA) are cleaved as a signal peptide. Positions 23–42 (DDSRGTQKHRSLRSTTKVSK) are excised as a propeptide. Disulfide bonds link cysteine 46–cysteine 62, cysteine 53–cysteine 65, and cysteine 61–cysteine 72.

It belongs to the conotoxin O1 superfamily. In terms of tissue distribution, expressed by the venom duct.

It localises to the secreted. Its function is as follows. Omega-conotoxins act at presynaptic membranes, they bind and block voltage-gated calcium channels (Cav). The protein is Omega-conotoxin-like 12 of Conus striatus (Striated cone).